Reading from the N-terminus, the 139-residue chain is Ribonuclease VapC36 (139 aa).

One can recognise a PINc domain in the interval 1–127 (MIVDTSAVVA…GNDFPQTDLE (127 aa)). The Mg(2+) site is built by Asp-4 and Asp-100.

This sequence belongs to the PINc/VapC protein family. Requires Mg(2+) as cofactor.

Toxic component of a type II toxin-antitoxin (TA) system. An RNase. Its cognate antitoxin is VapB36. This Mycobacterium tuberculosis (strain ATCC 25618 / H37Rv) protein is Ribonuclease VapC36.